We begin with the raw amino-acid sequence, 81 residues long: MANKLFLISLLCVVLVAKIAQAAPQYAPGEEPSYDEDTDDKLIENDTSITDEDYAEIEASLSQAFGTAADPGRRLGEGKKP.

A signal peptide spans 1–22; it reads MANKLFLISLLCVVLVAKIAQA. Asparagine 45 carries an N-linked (GlcNAc...) asparagine glycan. The blocks active site cleft of host thrombin in a reverse direction compared to substrates stretch occupies residues 70–73; it reads DPGR.

This sequence belongs to the anophelin family. As to quaternary structure, interacts with human F2 (thrombin); the interaction results in thrombin inhibition.

The protein localises to the secreted. Functionally, salivary protein with anticoagulant activity that inhibits host thrombin (F2). The polypeptide is Salivary thrombin inhibitor anophelin (Anopheles darlingi (Mosquito)).